A 447-amino-acid chain; its full sequence is Phosphoglucosamine mutase (447 aa).

The Phosphoserine intermediate role is filled by Ser102. Positions 102, 241, 243, and 245 each coordinate Mg(2+). Ser102 is modified (phosphoserine).

This sequence belongs to the phosphohexose mutase family. It depends on Mg(2+) as a cofactor. In terms of processing, activated by phosphorylation.

It catalyses the reaction alpha-D-glucosamine 1-phosphate = D-glucosamine 6-phosphate. In terms of biological role, catalyzes the conversion of glucosamine-6-phosphate to glucosamine-1-phosphate. In Pseudomonas savastanoi pv. phaseolicola (strain 1448A / Race 6) (Pseudomonas syringae pv. phaseolicola (strain 1448A / Race 6)), this protein is Phosphoglucosamine mutase.